Reading from the N-terminus, the 152-residue chain is Transcriptional regulator MraZ (152 aa).

2 consecutive SpoVT-AbrB domains span residues 5–52 and 81–124; these read ASAI…PADE and AHEI…DEAQ.

The protein belongs to the MraZ family. As to quaternary structure, forms oligomers.

It localises to the cytoplasm. The protein localises to the nucleoid. This chain is Transcriptional regulator MraZ, found in Shewanella amazonensis (strain ATCC BAA-1098 / SB2B).